We begin with the raw amino-acid sequence, 173 residues long: NADH-ubiquinone oxidoreductase chain 6 (173 aa).

Helical transmembrane passes span 1-21, 27-47, 48-68, 87-107, and 139-159; these read MTYF…AVAS, YGVV…LSLG, VSFV…VVFV, VVGY…IGGF, and CGVG…FVVL.

This sequence belongs to the complex I subunit 6 family.

Its subcellular location is the mitochondrion membrane. It carries out the reaction a ubiquinone + NADH + 5 H(+)(in) = a ubiquinol + NAD(+) + 4 H(+)(out). In terms of biological role, core subunit of the mitochondrial membrane respiratory chain NADH dehydrogenase (Complex I) that is believed to belong to the minimal assembly required for catalysis. Complex I functions in the transfer of electrons from NADH to the respiratory chain. The immediate electron acceptor for the enzyme is believed to be ubiquinone. The chain is NADH-ubiquinone oxidoreductase chain 6 (MT-ND6) from Cepphus columba (Pigeon guillemot).